The following is a 1342-amino-acid chain: DNA-directed RNA polymerase subunit beta (1342 aa).

Belongs to the RNA polymerase beta chain family. The RNAP catalytic core consists of 2 alpha, 1 beta, 1 beta' and 1 omega subunit. When a sigma factor is associated with the core the holoenzyme is formed, which can initiate transcription.

The enzyme catalyses RNA(n) + a ribonucleoside 5'-triphosphate = RNA(n+1) + diphosphate. In terms of biological role, DNA-dependent RNA polymerase catalyzes the transcription of DNA into RNA using the four ribonucleoside triphosphates as substrates. The polypeptide is DNA-directed RNA polymerase subunit beta (Vibrio parahaemolyticus serotype O3:K6 (strain RIMD 2210633)).